The primary structure comprises 213 residues: DNA-directed RNA polymerase subunit alpha (213 aa).

The protein belongs to the RNA polymerase alpha chain family. As to quaternary structure, in plastids the minimal PEP RNA polymerase catalytic core is composed of four subunits: alpha, beta, beta', and beta''. When a (nuclear-encoded) sigma factor is associated with the core the holoenzyme is formed, which can initiate transcription.

The protein resides in the plastid. It localises to the chloroplast. The enzyme catalyses RNA(n) + a ribonucleoside 5'-triphosphate = RNA(n+1) + diphosphate. DNA-dependent RNA polymerase catalyzes the transcription of DNA into RNA using the four ribonucleoside triphosphates as substrates. The sequence is that of DNA-directed RNA polymerase subunit alpha (rpoA) from Euglena stellata.